The sequence spans 469 residues: Ribulose bisphosphate carboxylase large chain (469 aa).

A propeptide spanning residues 1–2 (MS) is cleaved from the precursor. Pro3 is subject to N-acetylproline. At Lys14 the chain carries N6,N6,N6-trimethyllysine. Substrate contacts are provided by Asn123 and Thr173. Lys175 functions as the Proton acceptor in the catalytic mechanism. Lys177 lines the substrate pocket. Mg(2+) contacts are provided by Lys201, Asp203, and Glu204. An N6-carboxylysine modification is found at Lys201. His294 (proton acceptor) is an active-site residue. Substrate is bound by residues Arg295, His327, and Ser379.

The protein belongs to the RuBisCO large chain family. Type I subfamily. Heterohexadecamer of 8 large chains and 8 small chains; disulfide-linked. The disulfide link is formed within the large subunit homodimers. Mg(2+) serves as cofactor. Post-translationally, the disulfide bond which can form in the large chain dimeric partners within the hexadecamer appears to be associated with oxidative stress and protein turnover.

It is found in the plastid. It localises to the chloroplast. It carries out the reaction 2 (2R)-3-phosphoglycerate + 2 H(+) = D-ribulose 1,5-bisphosphate + CO2 + H2O. The enzyme catalyses D-ribulose 1,5-bisphosphate + O2 = 2-phosphoglycolate + (2R)-3-phosphoglycerate + 2 H(+). RuBisCO catalyzes two reactions: the carboxylation of D-ribulose 1,5-bisphosphate, the primary event in carbon dioxide fixation, as well as the oxidative fragmentation of the pentose substrate in the photorespiration process. Both reactions occur simultaneously and in competition at the same active site. The chain is Ribulose bisphosphate carboxylase large chain from Dianthus caryophyllus (Carnation).